Reading from the N-terminus, the 414-residue chain is MTKARLFRLWLVLGSVFMILLIIVYWDSAGAAHFYLHTSFSRPHTGPPLPTPGPDRDRELTADSDVDEFLDKFLSAGVKQSDLPRKETEQPPAPGSMEESVRGYDWSPRDARRSPDQGRQQAERRSVLRGFCANSSLAFPTKERAFDDIPNSELSHLIVDDRHGAIYCYVPKVACTNWKRVMIVLSGSLLHRGAPYRDPLRIPREHVHNASAHLTFNKFWRRYGKLSRHLMKVKLKKYTKFLFVRDPFVRLISAFRSKFELENEEFYRKFAVPMLRLYANHTSLPASAREAFRAGLKVSFANFIQYLLDPHTEKLAPFNEHWRQVYRLCHPCQIDYDFVGKLETLDEDAAQLLQLLQVDRQLRFPPSYRNRTASSWEEDWFAKIPLAWRQQLYKLYEADFVLFGYPKPENLLRD.

At 1–5 (MTKAR) the chain is on the cytoplasmic side. Residues 6-26 (LFRLWLVLGSVFMILLIIVYW) form a helical; Signal-anchor for type II membrane protein membrane-spanning segment. Residues 27 to 414 (DSAGAAHFYL…YPKPENLLRD (388 aa)) are Lumenal-facing. The disordered stretch occupies residues 80–125 (QSDLPRKETEQPPAPGSMEESVRGYDWSPRDARRSPDQGRQQAERR). The span at 99 to 125 (ESVRGYDWSPRDARRSPDQGRQQAERR) shows a compositional bias: basic and acidic residues. N-linked (GlcNAc...) asparagine glycosylation is present at asparagine 134. A 3'-phosphoadenylyl sulfate-binding site is contributed by 171-177 (PKVACTN). Asparagine 209 carries N-linked (GlcNAc...) asparagine glycosylation. 245-253 (RDPFVRLIS) provides a ligand contact to 3'-phosphoadenylyl sulfate. Asparagine 280 and asparagine 370 each carry an N-linked (GlcNAc...) asparagine glycan.

This sequence belongs to the sulfotransferase 2 family. Widely expressed. Expressed a high level in spinal chord, heart, spleen, thyroid, pituitary gland, adrenal gland, peripheral blood leukocytes, thymus, lung, small intestine, fetal kidney, fetal spleen and fetal lung.

It localises to the golgi apparatus membrane. It carries out the reaction chondroitin beta-D-glucuronate + n 3'-phosphoadenylyl sulfate = chondroitin 4'-sulfate + n adenosine 3',5'-bisphosphate + n H(+). Its function is as follows. Catalyzes the transfer of sulfate to position 4 of the N-acetylgalactosamine (GalNAc) residue of chondroitin and desulfated dermatan sulfate. Chondroitin sulfate constitutes the predominant proteoglycan present in cartilage and is distributed on the surfaces of many cells and extracellular matrices. Activity toward partially desulfated dermatan sulfate is however lower. Does not form 4, 6-di-O-sulfated GalNAc when chondroitin sulfate C is used as an acceptor. In Homo sapiens (Human), this protein is Carbohydrate sulfotransferase 12 (CHST12).